We begin with the raw amino-acid sequence, 367 residues long: UDP-N-acetylglucosamine--N-acetylmuramyl-(pentapeptide) pyrophosphoryl-undecaprenol N-acetylglucosamine transferase (367 aa).

Residues 15–17 (TGG), Asn127, Arg163, Ser191, Ile249, and Gln294 contribute to the UDP-N-acetyl-alpha-D-glucosamine site.

The protein belongs to the glycosyltransferase 28 family. MurG subfamily.

It localises to the cell inner membrane. The enzyme catalyses di-trans,octa-cis-undecaprenyl diphospho-N-acetyl-alpha-D-muramoyl-L-alanyl-D-glutamyl-meso-2,6-diaminopimeloyl-D-alanyl-D-alanine + UDP-N-acetyl-alpha-D-glucosamine = di-trans,octa-cis-undecaprenyl diphospho-[N-acetyl-alpha-D-glucosaminyl-(1-&gt;4)]-N-acetyl-alpha-D-muramoyl-L-alanyl-D-glutamyl-meso-2,6-diaminopimeloyl-D-alanyl-D-alanine + UDP + H(+). It participates in cell wall biogenesis; peptidoglycan biosynthesis. Functionally, cell wall formation. Catalyzes the transfer of a GlcNAc subunit on undecaprenyl-pyrophosphoryl-MurNAc-pentapeptide (lipid intermediate I) to form undecaprenyl-pyrophosphoryl-MurNAc-(pentapeptide)GlcNAc (lipid intermediate II). This Burkholderia thailandensis (strain ATCC 700388 / DSM 13276 / CCUG 48851 / CIP 106301 / E264) protein is UDP-N-acetylglucosamine--N-acetylmuramyl-(pentapeptide) pyrophosphoryl-undecaprenol N-acetylglucosamine transferase.